Here is a 218-residue protein sequence, read N- to C-terminus: Protein GrpE (218 aa).

Positions 1-78 (MSEFNKDDYL…DSADTLTPLG (78 aa)) are disordered. The segment covering 14–58 (PDPSDAEAAAQASSGADASAESGSAQDSAAQAPSNEGADAAPAAA) has biased composition (low complexity).

It belongs to the GrpE family. As to quaternary structure, homodimer.

The protein resides in the cytoplasm. In terms of biological role, participates actively in the response to hyperosmotic and heat shock by preventing the aggregation of stress-denatured proteins, in association with DnaK and GrpE. It is the nucleotide exchange factor for DnaK and may function as a thermosensor. Unfolded proteins bind initially to DnaJ; upon interaction with the DnaJ-bound protein, DnaK hydrolyzes its bound ATP, resulting in the formation of a stable complex. GrpE releases ADP from DnaK; ATP binding to DnaK triggers the release of the substrate protein, thus completing the reaction cycle. Several rounds of ATP-dependent interactions between DnaJ, DnaK and GrpE are required for fully efficient folding. The sequence is that of Protein GrpE from Bifidobacterium longum (strain NCC 2705).